Reading from the N-terminus, the 410-residue chain is Schlafen-like protein 1 (410 aa).

2 disordered regions span residues 1-20 (MSLR…VMSQ) and 141-199 (LHHR…SGVR). Over residues 8 to 20 (AQTQMWESPVMSQ) the composition is skewed to polar residues. The segment covering 154–173 (SHSPGPSPGPSPGLRHPPLP) has biased composition (pro residues). Position 264-271 (264-271 (GVEDSGLV)) interacts with ATP. Residues 370–401 (QKWAMELGKLEEKVKVLTLEKEQLQQQLRQRQ) adopt a coiled-coil conformation.

The protein belongs to the Schlafen family. Subgroup I subfamily.

The protein is Schlafen-like protein 1 (Slfnl1) of Mus musculus (Mouse).